Consider the following 122-residue polypeptide: Large ribosomal subunit protein uL22 (122 aa).

A disordered region spans residues 102 to 122 (VAEGKEMKSSKSHKKNQAEGK).

This sequence belongs to the universal ribosomal protein uL22 family. As to quaternary structure, part of the 50S ribosomal subunit.

Its function is as follows. This protein binds specifically to 23S rRNA; its binding is stimulated by other ribosomal proteins, e.g. L4, L17, and L20. It is important during the early stages of 50S assembly. It makes multiple contacts with different domains of the 23S rRNA in the assembled 50S subunit and ribosome. Functionally, the globular domain of the protein is located near the polypeptide exit tunnel on the outside of the subunit, while an extended beta-hairpin is found that lines the wall of the exit tunnel in the center of the 70S ribosome. In Helicobacter pylori (strain HPAG1), this protein is Large ribosomal subunit protein uL22.